A 1090-amino-acid polypeptide reads, in one-letter code: Exoglucanase B (1090 aa).

Residues 1–33 form the signal peptide; the sequence is MSSTTRRRSAWVAAATVGVSSFLAVAGITPAIA. Residues 34–53 constitute a propeptide that is removed on maturation; sequence AAGAGQPATVTVPAASPVRA. A catalytic region spans residues 54–699; that stretch reads AVDGEYAQRF…RLFDDGTTTP (646 aa). Aspartate 513 (nucleophile) is an active-site residue. 3 Fibronectin type-III domains span residues 706-791, 797-887, and 897-984; these read VPTG…TKAT, APSV…TKSD, and VPAG…TKTP. Positions 983-1090 constitute a CBM2 domain; sequence TPQTGGSCSV…SFTLNGASCT (108 aa). Cysteine 990 and cysteine 1089 are disulfide-bonded. Residues 1069–1090 are disordered; that stretch reads NGSHTGQNPNPASFTLNGASCT. Over residues 1070 to 1090 the composition is skewed to polar residues; it reads GSHTGQNPNPASFTLNGASCT.

It belongs to the glycosyl hydrolase 48 (cellulase L) family.

The enzyme catalyses Hydrolysis of (1-&gt;4)-beta-D-glucosidic linkages in cellulose and cellotetraose, releasing cellobiose from the non-reducing ends of the chains.. Hydrolyzes cellohexaose to a mixture of cellotetraose, cellotriose and cellobiose, with only a trace of glucose. It hydrolyzed cellopentaose to cellotriose and cellobiose, and cellotetraose to cellobiose, but it did not hydrolyze cellotriose. Also has weak endoglucanase activity. Hydrolyzes glucosidic bonds with inversion of anomeric configuration. The polypeptide is Exoglucanase B (cbhB) (Cellulomonas fimi (strain ATCC 484 / DSM 20113 / JCM 1341 / CCUG 24087 / LMG 16345 / NBRC 15513 / NCIMB 8980 / NCTC 7547 / NRS-133)).